The primary structure comprises 642 residues: Threonine--tRNA ligase (642 aa).

A TGS domain is found at Met-1–Ser-61. Residues Asp-243–Pro-534 are catalytic. Zn(2+)-binding residues include Cys-334, His-385, and His-511.

This sequence belongs to the class-II aminoacyl-tRNA synthetase family. In terms of assembly, homodimer. Zn(2+) serves as cofactor.

The protein resides in the cytoplasm. It carries out the reaction tRNA(Thr) + L-threonine + ATP = L-threonyl-tRNA(Thr) + AMP + diphosphate + H(+). Catalyzes the attachment of threonine to tRNA(Thr) in a two-step reaction: L-threonine is first activated by ATP to form Thr-AMP and then transferred to the acceptor end of tRNA(Thr). Also edits incorrectly charged L-seryl-tRNA(Thr). The polypeptide is Threonine--tRNA ligase (Buchnera aphidicola subsp. Schizaphis graminum (strain Sg)).